The primary structure comprises 221 residues: 7-cyano-7-deazaguanine synthase (221 aa).

7–17 (LSGGMDSTTLL) serves as a coordination point for ATP. Zn(2+)-binding residues include Cys-183, Cys-191, Cys-194, and Cys-197.

It belongs to the QueC family. As to quaternary structure, homodimer. Zn(2+) is required as a cofactor.

It catalyses the reaction 7-carboxy-7-deazaguanine + NH4(+) + ATP = 7-cyano-7-deazaguanine + ADP + phosphate + H2O + H(+). It functions in the pathway purine metabolism; 7-cyano-7-deazaguanine biosynthesis. Catalyzes the ATP-dependent conversion of 7-carboxy-7-deazaguanine (CDG) to 7-cyano-7-deazaguanine (preQ(0)). The chain is 7-cyano-7-deazaguanine synthase from Caldicellulosiruptor bescii (strain ATCC BAA-1888 / DSM 6725 / KCTC 15123 / Z-1320) (Anaerocellum thermophilum).